The chain runs to 362 residues: Aspartate carbamoyltransferase catalytic subunit (362 aa).

Residues 1–22 (MPKTAMTDSTSKTSTNTASSDM) form a disordered region. A compositionally biased stretch (low complexity) spans 7–20 (TDSTSKTSTNTASS). The carbamoyl phosphate site is built by R100 and T101. K128 is a binding site for L-aspartate. 3 residues coordinate carbamoyl phosphate: R150, H180, and Q183. Residues R214 and R269 each coordinate L-aspartate. Residues G310 and P311 each contribute to the carbamoyl phosphate site.

This sequence belongs to the aspartate/ornithine carbamoyltransferase superfamily. ATCase family. As to quaternary structure, heterododecamer (2C3:3R2) of six catalytic PyrB chains organized as two trimers (C3), and six regulatory PyrI chains organized as three dimers (R2).

It catalyses the reaction carbamoyl phosphate + L-aspartate = N-carbamoyl-L-aspartate + phosphate + H(+). It functions in the pathway pyrimidine metabolism; UMP biosynthesis via de novo pathway; (S)-dihydroorotate from bicarbonate: step 2/3. Functionally, catalyzes the condensation of carbamoyl phosphate and aspartate to form carbamoyl aspartate and inorganic phosphate, the committed step in the de novo pyrimidine nucleotide biosynthesis pathway. The chain is Aspartate carbamoyltransferase catalytic subunit from Psychrobacter sp. (strain PRwf-1).